A 394-amino-acid polypeptide reads, in one-letter code: Ribulose bisphosphate carboxylase large chain (394 aa).

At Lys5 the chain carries N6,N6,N6-trimethyllysine. Substrate contacts are provided by Asn114 and Thr164. Lys166 serves as the catalytic Proton acceptor. Position 168 (Lys168) interacts with substrate. Mg(2+)-binding residues include Lys192, Asp194, and Glu195. Residue Lys192 is modified to N6-carboxylysine. The active-site Proton acceptor is His285. Residues Arg286, His318, and Ser370 each contribute to the substrate site.

Belongs to the RuBisCO large chain family. Type I subfamily. As to quaternary structure, heterohexadecamer of 8 large chains and 8 small chains. The cofactor is Mg(2+).

It is found in the plastid. It localises to the chloroplast. The catalysed reaction is 2 (2R)-3-phosphoglycerate + 2 H(+) = D-ribulose 1,5-bisphosphate + CO2 + H2O. It catalyses the reaction D-ribulose 1,5-bisphosphate + O2 = 2-phosphoglycolate + (2R)-3-phosphoglycerate + 2 H(+). In terms of biological role, ruBisCO catalyzes two reactions: the carboxylation of D-ribulose 1,5-bisphosphate, the primary event in carbon dioxide fixation, as well as the oxidative fragmentation of the pentose substrate in the photorespiration process. Both reactions occur simultaneously and in competition at the same active site. This chain is Ribulose bisphosphate carboxylase large chain (rbcL), found in Victoria cruziana (Santa Cruz water lily).